The chain runs to 84 residues: U21-theraphotoxin-Cg1b (84 aa).

An N-terminal signal peptide occupies residues 1-21 (MKVSVLITLAVLGVMFLLTSA). Positions 22-47 (EERGSDQMDSPAWLKSMERIFQSEER) are excised as a propeptide. Disulfide bonds link Cys-49–Cys-63, Cys-56–Cys-68, and Cys-62–Cys-76. Residue Phe-82 is modified to Phenylalanine amide.

It belongs to the neurotoxin 10 (Hwtx-1) family. 05 (F4a) subfamily. In terms of tissue distribution, expressed by the venom gland.

It localises to the secreted. Probable ion channel inhibitor. This chain is U21-theraphotoxin-Cg1b, found in Chilobrachys guangxiensis (Chinese earth tiger tarantula).